Here is a 306-residue protein sequence, read N- to C-terminus: Non-specific ribonucleoside hydrolase RihC (306 aa).

His235 is a catalytic residue.

It belongs to the IUNH family. RihC subfamily.

Its function is as follows. Hydrolyzes both purine and pyrimidine ribonucleosides with a broad-substrate specificity. The protein is Non-specific ribonucleoside hydrolase RihC of Salmonella dublin (strain CT_02021853).